We begin with the raw amino-acid sequence, 464 residues long: Probable acid phosphatase DDB_G0284753 (464 aa).

Residues 1–29 (MFSYFRKSQQKVEENQNGGGGDGRGSGIK) form a disordered region. The span at 17-26 (NGGGGDGRGS) shows a compositional bias: gly residues. H81 serves as the catalytic Nucleophile. The disordered stretch occupies residues 180-202 (SFTDEQEKSPHHSSFLVKPDNEE). D347 acts as the Proton donor in catalysis.

It belongs to the histidine acid phosphatase family.

The catalysed reaction is a phosphate monoester + H2O = an alcohol + phosphate. In Dictyostelium discoideum (Social amoeba), this protein is Probable acid phosphatase DDB_G0284753.